A 330-amino-acid chain; its full sequence is MKTAYIAKQRQISFVKSHFSRQLEERLGLIEVQAPILSRVGDGTQDNLSGCEKAVQVKVKALPDAQFEVVHSLAKWKRQTLGQHDFSAGEGLYTHMKALRPDEDRLSPLHSVYVDQWDWERVMGDGERQFSTLKSTVEAIWEGIKATEAAVSEEFGLAPFLPDQIHFVHSQELLSRYPELDAKGRERAIAKDLGAVFLVGIGGKLSDGHRHDVRAPDYDDWSTPSELGHAGLNGDILVWNPVLEDAFELSSMGIRVDADTLKHQLALTGDEDRLELEWHQALLRGEMPQTIGGGIGQSRLTMLLLQLPHIGQVQCGVWPAAVRESVPSLL.

Belongs to the class-II aminoacyl-tRNA synthetase family. AsnA subfamily.

The protein resides in the cytoplasm. It carries out the reaction L-aspartate + NH4(+) + ATP = L-asparagine + AMP + diphosphate + H(+). The protein operates within amino-acid biosynthesis; L-asparagine biosynthesis; L-asparagine from L-aspartate (ammonia route): step 1/1. The chain is Aspartate--ammonia ligase from Escherichia coli O45:K1 (strain S88 / ExPEC).